We begin with the raw amino-acid sequence, 337 residues long: Anthranilate phosphoribosyltransferase (337 aa).

5-phospho-alpha-D-ribose 1-diphosphate contacts are provided by residues G80, 83 to 84, T88, 90 to 93, 108 to 116, and S120; these read GD, NIST, and KHGNRAVSS. G80 contacts anthranilate. S92 is a binding site for Mg(2+). N111 is a binding site for anthranilate. R166 contacts anthranilate. Residues D224 and E225 each coordinate Mg(2+).

It belongs to the anthranilate phosphoribosyltransferase family. Homodimer. It depends on Mg(2+) as a cofactor.

The catalysed reaction is N-(5-phospho-beta-D-ribosyl)anthranilate + diphosphate = 5-phospho-alpha-D-ribose 1-diphosphate + anthranilate. Its pathway is amino-acid biosynthesis; L-tryptophan biosynthesis; L-tryptophan from chorismate: step 2/5. Catalyzes the transfer of the phosphoribosyl group of 5-phosphorylribose-1-pyrophosphate (PRPP) to anthranilate to yield N-(5'-phosphoribosyl)-anthranilate (PRA). The polypeptide is Anthranilate phosphoribosyltransferase (Anaeromyxobacter sp. (strain Fw109-5)).